A 518-amino-acid chain; its full sequence is Protein PAC2 (518 aa).

The CAP-Gly domain maps to 23-67; the sequence is VIKPWPSVKAYGVEWDDHSRGKHSGTIDDIHYFDVQIPNSGSFLK. 8 LRR repeats span residues 153 to 174, 179 to 201, 204 to 227, 229 to 252, 255 to 276, 277 to 298, 299 to 319, and 324 to 345; these read NVKD…CEFI, NLES…KEYD, HIKT…LKSF, TLKM…ENEI, TLEE…PKNL, TLKG…AIYS, VESL…DDLN, and SLKN…INVE.

The protein resides in the cytoplasm. It is found in the cytoskeleton. Required for viability in the absence of the kinesin-related CIN8 mitotic motor. Seems to be involved in the assembly of alpha-tubulin. The protein is Protein PAC2 (PAC2) of Saccharomyces cerevisiae (strain ATCC 204508 / S288c) (Baker's yeast).